The following is a 582-amino-acid chain: Aspartate--tRNA ligase (582 aa).

Residue glutamate 174 coordinates L-aspartate. Residues 198–201 (QITK) form an aspartate region. Arginine 220 contacts L-aspartate. Residues 220-222 (RDE) and glutamine 229 contribute to the ATP site. Histidine 443 is a binding site for L-aspartate. An ATP-binding site is contributed by glutamate 477. L-aspartate is bound at residue arginine 484. 529–532 (GLDR) serves as a coordination point for ATP.

This sequence belongs to the class-II aminoacyl-tRNA synthetase family. Type 1 subfamily. As to quaternary structure, homodimer.

The protein resides in the cytoplasm. The catalysed reaction is tRNA(Asp) + L-aspartate + ATP = L-aspartyl-tRNA(Asp) + AMP + diphosphate. Its function is as follows. Catalyzes the attachment of L-aspartate to tRNA(Asp) in a two-step reaction: L-aspartate is first activated by ATP to form Asp-AMP and then transferred to the acceptor end of tRNA(Asp). This is Aspartate--tRNA ligase from Streptococcus pyogenes serotype M18 (strain MGAS8232).